Here is a 179-residue protein sequence, read N- to C-terminus: Transcription initiation factor TFIID subunit 10 (179 aa).

The tract at residues 1–23 (MNDPEQYEPSSSTESVLMPPPAL) is disordered.

The protein belongs to the TAF10 family. Component of the TFIID basal transcription factor complex, composed of TATA-box-binding protein tbp-1, and a number of TBP-associated factors (TAFs).

Its subcellular location is the nucleus. The TFIID basal transcription factor complex plays a major role in the initiation of RNA polymerase II (Pol II)-dependent transcription. TFIID recognizes and binds promoters via its subunit tbp-1, a TATA-box-binding protein, and promotes assembly of the pre-initiation complex (PIC). The TFIID complex consists of tbp-1 and TBP-associated factors (TAFs), including taf-10. Essential for early embryonic development, but not required for transcription of some genes; probably acts via activating transcription initiation by RNA Pol II, as part of the TFIID complex. The sequence is that of Transcription initiation factor TFIID subunit 10 from Caenorhabditis elegans.